The primary structure comprises 183 residues: Ribosome-recycling factor (183 aa).

This sequence belongs to the RRF family.

The protein resides in the cytoplasm. Functionally, responsible for the release of ribosomes from messenger RNA at the termination of protein biosynthesis. May increase the efficiency of translation by recycling ribosomes from one round of translation to another. The protein is Ribosome-recycling factor of Bifidobacterium longum subsp. infantis (strain ATCC 15697 / DSM 20088 / JCM 1222 / NCTC 11817 / S12).